We begin with the raw amino-acid sequence, 40 residues long: Protein YneP (40 aa).

The sequence is that of Protein YneP from Escherichia coli (strain K12).